The following is a 184-amino-acid chain: Photosystem I assembly protein Ycf4 (184 aa).

Transmembrane regions (helical) follow at residues 22–42 (FCWA…GISS) and 57–77 (ILFF…LFIS).

It belongs to the Ycf4 family.

Its subcellular location is the plastid. It localises to the chloroplast thylakoid membrane. In terms of biological role, seems to be required for the assembly of the photosystem I complex. The polypeptide is Photosystem I assembly protein Ycf4 (Populus trichocarpa (Western balsam poplar)).